We begin with the raw amino-acid sequence, 628 residues long: tRNA uridine 5-carboxymethylaminomethyl modification enzyme MnmG (628 aa).

Residue 13–18 coordinates FAD; it reads GAGHAG. NAD(+) is bound at residue 273–287; it reads GPRYCPSIEDKIVRF.

Belongs to the MnmG family. In terms of assembly, homodimer. Heterotetramer of two MnmE and two MnmG subunits. The cofactor is FAD.

The protein localises to the cytoplasm. Its function is as follows. NAD-binding protein involved in the addition of a carboxymethylaminomethyl (cmnm) group at the wobble position (U34) of certain tRNAs, forming tRNA-cmnm(5)s(2)U34. The chain is tRNA uridine 5-carboxymethylaminomethyl modification enzyme MnmG from Buchnera aphidicola subsp. Acyrthosiphon pisum (strain APS) (Acyrthosiphon pisum symbiotic bacterium).